Reading from the N-terminus, the 276-residue chain is Type II pantothenate kinase (276 aa).

8–15 (DAGGTLTK) contacts ATP. Glu-76 functions as the Proton acceptor in the catalytic mechanism. ATP is bound by residues Thr-105, 127–131 (GGTIM), Phe-143, and Ser-230.

It belongs to the type II pantothenate kinase family. As to quaternary structure, homodimer.

The protein resides in the cytoplasm. It carries out the reaction (R)-pantothenate + ATP = (R)-4'-phosphopantothenate + ADP + H(+). The protein operates within cofactor biosynthesis; coenzyme A biosynthesis; CoA from (R)-pantothenate: step 1/5. Its function is as follows. Catalyzes the phosphorylation of pantothenate (Pan), the first step in CoA biosynthesis. The protein is Type II pantothenate kinase of Bacillus thuringiensis subsp. konkukian (strain 97-27).